Consider the following 274-residue polypeptide: Proliferating cell nuclear antigen 1 (274 aa).

A DNA-binding region spans residues 61–80 (RCDRERVLGVNIASLNKVFK).

This sequence belongs to the PCNA family. As to quaternary structure, homotrimer. Interacts with ORC1 (via PIP-box motif); the interaction occurs during DNA replication in trophozoites. Interacts with ORC5; the interaction occurs during the trophozoite stage but not at the late schizont stage. Interacts with FEN1.

The protein resides in the nucleus. Its subcellular location is the chromosome. It localises to the cytoplasm. Functionally, auxiliary protein of DNA polymerase delta and is involved in the control of DNA replication by increasing the polymerase processibility during elongation of the leading strand. Involved in DNA damage response. The polypeptide is Proliferating cell nuclear antigen 1 (Plasmodium falciparum (isolate 3D7)).